A 117-amino-acid chain; its full sequence is DNA-directed RNA polymerase subunit omega (117 aa).

Over residues K96 to Q105 the composition is skewed to basic and acidic residues. The tract at residues K96–E117 is disordered. The segment covering S108–E117 has biased composition (low complexity).

The protein belongs to the RNA polymerase subunit omega family. In terms of assembly, the RNAP catalytic core consists of 2 alpha, 1 beta, 1 beta' and 1 omega subunit. When a sigma factor is associated with the core the holoenzyme is formed, which can initiate transcription.

The catalysed reaction is RNA(n) + a ribonucleoside 5'-triphosphate = RNA(n+1) + diphosphate. Promotes RNA polymerase assembly. Latches the N- and C-terminal regions of the beta' subunit thereby facilitating its interaction with the beta and alpha subunits. This Lactococcus lactis subsp. cremoris (strain SK11) protein is DNA-directed RNA polymerase subunit omega.